The primary structure comprises 518 residues: Circadian clock oscillator protein KaiC (518 aa).

The KaiC 1 domain occupies 1-247 (MTNLPEHQSS…FTINNGINIF (247 aa)). 7 residues coordinate ATP: Ser49, Gly50, Thr51, Gly52, Lys53, Thr54, and Leu55. Thr54 contacts Mg(2+). Glu78 functions as the Proton acceptor in CI (KaiC 1) in the catalytic mechanism. Position 90 (Ser90) interacts with ATP. The segment at 116-123 (QEVAGDFD) is B-loop, required to bind KaiB and SasA. ATP is bound by residues Lys225, Leu226, Arg227, Thr229, and His231. Residues 248–260 (PLGAMRLTQRSSN) are linker. Positions 261 to 518 (VRVSSGVKTL…AKGMQDLESE (258 aa)) constitute a KaiC 2 domain. ATP contacts are provided by Thr290, Gly291, Thr292, Gly293, Lys294, Thr295, and Leu296. Residue Thr295 coordinates Mg(2+). Residue Glu318 coordinates Mg(2+). The active-site Proton acceptor in CII (KaiC 2) is the Glu318. Trp331 lines the ATP pocket. Ser431 is modified (phosphoserine; by autocatalysis). Thr432 is modified (phosphothreonine; by autocatalysis). Arg451, Lys457, Met458, Arg459, Ser461, His463, and Lys465 together coordinate ATP. The segment at 488 to 497 (GIISGTPTRI) is A-loop, interacts with KaiA.

Belongs to the KaiC family. As to quaternary structure, homohexamer resembling 2 stacked donuts rings with a central pore nearly blocked on one side; hexamerization is dependent on ATP-binding. Binds 2 ATP per monomer, at the subunit interface on each ring. The KaiABC complex composition changes during the circadian cycle to control KaiC phosphorylation. Complexes KaiC(6), KaiA(2-4):KaiC(6), KaiB(6):KaiC(6) and KaiC(6):KaiB(6):KaiA(12) are among the most important forms, many form cooperatively. Interacts with SasA, probably as 1 SasA trimer:1 KaiC homohexamer, has highest affinity for unphosphorylated SasA. The CI domain binds to KaiB and SasA; as they have a similar fold they compete for the same site on CI. KaiB assumes a thioredoxin-like form called KaiB(fs) when bound to KaiC. Mg(2+) serves as cofactor. In terms of processing, phosphorylated on serine/threonine residues by autocatalysis. Both phosphorylated and unphosphorylated forms exist. Both autophosphorylates and autodephosphorylates. Phosphorylated form correlates with clock speed. Phosphorylated on serine and threonine residues by autocatalysis. Has a 4 step phosphorylation cycle; the autokinase acts first on Thr-432, then Ser-431. When Ser-431 is modified KaiC switches to an autophosphatase mode, acting first on phospho-Thr-432 then phospho-Ser-431.

It catalyses the reaction L-seryl-[protein] + ATP = O-phospho-L-seryl-[protein] + ADP + H(+). The enzyme catalyses L-threonyl-[protein] + ATP = O-phospho-L-threonyl-[protein] + ADP + H(+). The catalysed reaction is ATP + H2O = ADP + phosphate + H(+). With respect to regulation, the interaction with KaiA enhances its phosphorylation status, while the interaction with KaiB decreases it. Its function is as follows. Central component of the KaiABC oscillator complex, which constitutes the main circadian regulator in cyanobacteria. Complex composition changes during the circadian cycle to control KaiC phosphorylation. KaiA stimulates KaiC autophosphorylation, while KaiB sequesters KaiA, leading to KaiC autodephosphorylation. Clock output pathways impact the RpaA transcriptional regulator. KaiC enhances the autophosphorylation activity of SasA, which then transfers its phosphate group to RpaA to activate it. KaiB and KaiC together enhance the phospho-RpaA dephosphatase activity of CikA. In terms of biological role, stimulates SasA autophosphorylation. Fully phosphorylated KaiC (tested with phosphomimetic Asp-431-432-Asp) is the best stimulant, requires the ATPase activity of the CII domain. Unphosphorylated SasA associates with KaiC and its autophosphorylation activity is enhanced. Phospho-SasA is released and associates with RpaA, transferring its phosphate group. Formation of the KaiA:KaiB complex is promoted by KaiC, helping switch KaiC from its autophosphorylation to autodephosphatase function. Functionally, has a weak, temperature-independent ATPase activity (about 14 molecules of ATP per day) that defines the circadian period. ATPase activity is mostly contributed by the CI domain; the CII domain augments the activity. The addition of KaiA increases activity. ATPase is inhibited during the KaiC phosphorylating phase and activated during the KaiC dephosphorylating phase. This chain is Circadian clock oscillator protein KaiC, found in Thermosynechococcus vestitus (strain NIES-2133 / IAM M-273 / BP-1).